Here is a 205-residue protein sequence, read N- to C-terminus: CD83 antigen (205 aa).

Residues 1 to 19 (MSRGLQLLLLSCAYSLAPA) form the signal peptide. Positions 20-114 (TPEVKVACSE…YRCTLQDPDG (95 aa)) constitute an Ig-like V-type domain. Residues 20–144 (TPEVKVACSE…EETFKKYRAE (125 aa)) lie on the Extracellular side of the membrane. A disulfide bridge links Cys35 with Cys107. Residues 60–69 (METPQEDHLR) are compositionally biased toward basic and acidic residues. The interval 60–81 (METPQEDHLRGQHYHQKGQNGS) is disordered. N-linked (GlcNAc...) asparagine glycosylation is found at Asn79, Asn96, and Asn117. Residues 145-166 (IVLLLALVIFYLTLIIFTCKFA) form a helical membrane-spanning segment. The Cytoplasmic segment spans residues 167–205 (RLQSIFPDFSKAGMERAFLPVTSPNKHLGLVTPHKTELV).

Monomer. Homodimer. Homotrimer. Interacts with MARCHF1; this interaction antagonizes MARCHF1-mediated MHC II and CD86 down-regulation. In terms of processing, glycosylated when expressed on activated dendritic cells. As to expression, expressed by activated lymphocytes, Langerhans cells and activatd dendritic cells.

It localises to the membrane. Functionally, transmembrane glycoprotein predominantly found on the surface of many immune cells including dendritic cells or lymphocytes that plays various roles in immune response regulation. Plays an essential role in CD4(+) T-selection, differentiation and stability by regulating the activity of the major E3 ubiquitin ligase responsible for controlling MHCII trafficking MARCHF8. Also inhibits MARCHF1 association with MHCII or CD86 to prevent their ubiquitination and subsequent degradation. In addition, acts as an important modulator of protective responses against acute infections. This chain is CD83 antigen (CD83), found in Homo sapiens (Human).